A 1189-amino-acid polypeptide reads, in one-letter code: Pesticidal crystal protein Cry1Ca (1189 aa).

It belongs to the delta endotoxin family.

Its function is as follows. Promotes colloidosmotic lysis by binding to the midgut epithelial cells of many lepidopteran larvae including Spodoptera species. This is Pesticidal crystal protein Cry1Ca (cry1Ca) from Bacillus thuringiensis subsp. entomocidus.